The following is a 1165-amino-acid chain: Chitin synthase 3 (1165 aa).

At 1-170 (MTGLNGDDPD…ETNDTLSFWQ (170 aa)) the chain is on the cytoplasmic side. 2 disordered regions span residues 19 to 53 (DEES…NNPD) and 74 to 97 (PSST…GSVR). Polar residues predominate over residues 74–92 (PSSTGVNPNATRRSGSLRS). Residue Lys136 forms a Glycyl lysine isopeptide (Lys-Gly) (interchain with G-Cter in ubiquitin) linkage. Residues 171–191 (MYCYFITFWAPAPILAFCGMP) form a helical membrane-spanning segment. Over 192 to 340 (KKERQMAWRE…PNFTVENYAG (149 aa)) the chain is Extracellular. N-linked (GlcNAc...) asparagine glycosylation is found at Asn303 and Asn332. A helical transmembrane segment spans residues 341-354 (WNCHTSKEDRDAFY). Residues 355–452 (GLKSKADVYF…SKTVGCIASD (98 aa)) are Cytoplasmic-facing. Residues 453 to 473 (VVLYVSLVFILSVVIIKFIIA) traverse the membrane as a helical segment. Topologically, residues 474–891 (CYFRWTVARK…EYYISHHQAK (418 aa)) are extracellular. Ser537 carries the post-translational modification Phosphoserine. At Thr538 the chain carries Phosphothreonine. The chain crosses the membrane as a helical span at residues 892-910 (AFESVFGSVTCLPGCFSMY). Residues 911–1029 (RIKSPKGSDG…SMQFVIGIEL (119 aa)) are Cytoplasmic-facing. The helical transmembrane segment at 1030-1050 (IGTMVLPLAICFTIYVIIFAI) threads the bilayer. Residues 1051 to 1055 (VSKPT) are Extracellular-facing. The helical transmembrane segment at 1056–1076 (PVITLVLLAIILGLPGLIVVI) threads the bilayer. Residues 1077 to 1165 (TATRWSYLWW…RKEESDSFVA (89 aa)) are Cytoplasmic-facing.

Belongs to the chitin synthase family. Class IV subfamily. As to quaternary structure, homodimer. May form higher order oligomers. Seems to interact with BNI4 and SKT5 which link CHS3 to septins. In terms of processing, glycosylated. Post-translationally, palmitoylated by PFA4; required for proper export from the ER.

The protein resides in the cell membrane. It is found in the bud neck. It localises to the cytoplasmic vesicle membrane. It catalyses the reaction [(1-&gt;4)-N-acetyl-beta-D-glucosaminyl](n) + UDP-N-acetyl-alpha-D-glucosamine = [(1-&gt;4)-N-acetyl-beta-D-glucosaminyl](n+1) + UDP + H(+). Its function is as follows. Polymerizes chitin, a structural polymer of the cell wall and septum, by transferring the sugar moiety of UDP-GlcNAc to the non-reducing end of the growing chitin polymer. Appears to be responsible for synthesis of the majority of the chitin found in the cell wall periphery. It is involved in the synthesis of the chitin ring that forms in the cell wall just before bud emergence. This ring remains at the base of the bud as the bud grows and ultimately forms part of the bud scar marking the division site on the mother cell. Also catalyzes the synthesis of chitin laid down during mating and spore cell-wall synthesis. This is Chitin synthase 3 from Saccharomyces cerevisiae (strain ATCC 204508 / S288c) (Baker's yeast).